The chain runs to 116 residues: MLTASLLRAVIASICVVSSMAQKVTQAQTEISVVEKEDVTLDCVYETRDTTYYLFWYKQPPSGELVFLIRRNSFDEQNEISGRYSWNFQKSTSSFNFTITASQVVDSAVYFCALSE.

Residues 1–21 (MLTASLLRAVIASICVVSSMA) form the signal peptide. The 95-residue stretch at 22-116 (QKVTQAQTEI…SAVYFCALSE (95 aa)) folds into the Ig-like domain. Cysteine 43 and cysteine 112 form a disulfide bridge. N-linked (GlcNAc...) asparagine glycosylation occurs at asparagine 96.

As to quaternary structure, alpha-beta TR is a heterodimer composed of an alpha and beta chain; disulfide-linked. The alpha-beta TR is associated with the transmembrane signaling CD3 coreceptor proteins to form the TR-CD3 (TcR or TCR). The assembly of alpha-beta TR heterodimers with CD3 occurs in the endoplasmic reticulum where a single alpha-beta TR heterodimer associates with one CD3D-CD3E heterodimer, one CD3G-CD3E heterodimer and one CD247 homodimer forming a stable octameric structure. CD3D-CD3E and CD3G-CD3E heterodimers preferentially associate with TR alpha and TR beta chains, respectively. The association of the CD247 homodimer is the last step of TcR assembly in the endoplasmic reticulum and is required for transport to the cell surface.

It is found in the cell membrane. Its function is as follows. V region of the variable domain of T cell receptor (TR) alpha chain that participates in the antigen recognition. Alpha-beta T cell receptors are antigen specific receptors which are essential to the immune response and are present on the cell surface of T lymphocytes. Recognize peptide-major histocompatibility (MH) (pMH) complexes that are displayed by antigen presenting cells (APC), a prerequisite for efficient T cell adaptive immunity against pathogens. Binding of alpha-beta TR to pMH complex initiates TR-CD3 clustering on the cell surface and intracellular activation of LCK that phosphorylates the ITAM motifs of CD3G, CD3D, CD3E and CD247 enabling the recruitment of ZAP70. In turn ZAP70 phosphorylates LAT, which recruits numerous signaling molecules to form the LAT signalosome. The LAT signalosome propagates signal branching to three major signaling pathways, the calcium, the mitogen-activated protein kinase (MAPK) kinase and the nuclear factor NF-kappa-B (NF-kB) pathways, leading to the mobilization of transcription factors that are critical for gene expression and essential for T cell growth and differentiation. The T cell repertoire is generated in the thymus, by V-(D)-J rearrangement. This repertoire is then shaped by intrathymic selection events to generate a peripheral T cell pool of self-MH restricted, non-autoaggressive T cells. Post-thymic interaction of alpha-beta TR with the pMH complexes shapes TR structural and functional avidity. This chain is T cell receptor alpha variable 19, found in Homo sapiens (Human).